Consider the following 263-residue polypeptide: Uroporphyrinogen-III C-methyltransferase (263 aa).

S-adenosyl-L-homocysteine is bound by residues proline 20, 96-98, 126-127, methionine 180, and alanine 237; these read GGD and TA.

This sequence belongs to the precorrin methyltransferase family.

It carries out the reaction uroporphyrinogen III + 2 S-adenosyl-L-methionine = precorrin-2 + 2 S-adenosyl-L-homocysteine + H(+). It participates in cofactor biosynthesis; adenosylcobalamin biosynthesis; precorrin-2 from uroporphyrinogen III: step 1/1. The protein operates within porphyrin-containing compound metabolism; siroheme biosynthesis; precorrin-2 from uroporphyrinogen III: step 1/1. Catalyzes the two successive C-2 and C-7 methylation reactions involved in the conversion of uroporphyrinogen III to precorrin-2 via the intermediate formation of precorrin-1. It is a step in the biosynthesis of both cobalamin (vitamin B12) and siroheme. In Synechocystis sp. (strain ATCC 27184 / PCC 6803 / Kazusa), this protein is Uroporphyrinogen-III C-methyltransferase (cobA).